A 161-amino-acid polypeptide reads, in one-letter code: Low molecular weight phosphotyrosine protein phosphatase (161 aa).

The active-site Nucleophile is Cys14. Catalysis depends on Arg20, which acts as the Transition state stabilizer. Ser57 is modified (phosphoserine). Asp133 functions as the Proton donor in the catalytic mechanism.

Belongs to the low molecular weight phosphotyrosine protein phosphatase family.

It localises to the cytoplasm. It catalyses the reaction O-phospho-L-tyrosyl-[protein] + H2O = L-tyrosyl-[protein] + phosphate. The enzyme catalyses a phosphate monoester + H2O = an alcohol + phosphate. Functionally, acts on tyrosine phosphorylated proteins, low-MW aryl phosphates and natural and synthetic acyl phosphates. This Saccharomyces cerevisiae (strain ATCC 204508 / S288c) (Baker's yeast) protein is Low molecular weight phosphotyrosine protein phosphatase.